The sequence spans 308 residues: Oxygen-dependent coproporphyrinogen-III oxidase (308 aa).

A substrate-binding site is contributed by S92. H96 and H106 together coordinate a divalent metal cation. H106 serves as the catalytic Proton donor. 108 to 110 (NVR) is a binding site for substrate. Residues H145 and H175 each coordinate a divalent metal cation. The tract at residues 240-275 (YVEFNLVWDRGTLFGLQTGGRTESILMSMPPLVRWE) is important for dimerization. Position 258-260 (258-260 (GGR)) interacts with substrate.

This sequence belongs to the aerobic coproporphyrinogen-III oxidase family. As to quaternary structure, homodimer. A divalent metal cation is required as a cofactor.

The protein localises to the cytoplasm. It catalyses the reaction coproporphyrinogen III + O2 + 2 H(+) = protoporphyrinogen IX + 2 CO2 + 2 H2O. It participates in porphyrin-containing compound metabolism; protoporphyrin-IX biosynthesis; protoporphyrinogen-IX from coproporphyrinogen-III (O2 route): step 1/1. In terms of biological role, involved in the heme biosynthesis. Catalyzes the aerobic oxidative decarboxylation of propionate groups of rings A and B of coproporphyrinogen-III to yield the vinyl groups in protoporphyrinogen-IX. This chain is Oxygen-dependent coproporphyrinogen-III oxidase, found in Salmonella paratyphi A (strain ATCC 9150 / SARB42).